The chain runs to 255 residues: Putative deoxyribonuclease tatdn3-B (255 aa).

Residues H11, H13, E106, H129, H152, and D199 each coordinate Zn(2+).

Belongs to the metallo-dependent hydrolases superfamily. TatD-type hydrolase family. Mn(2+) is required as a cofactor. Requires Ca(2+) as cofactor. It depends on Mg(2+) as a cofactor. Zn(2+) serves as cofactor.

It is found in the nucleus. Its activity is regulated as follows. The 3'-exonuclease activity is sensitive to the metal ion present in the active site, whereas the AP endodeoxyribonuclease activity is observed in a variety of divalent metal cofactors. 3'-exoxonuclease activity is suppressed in the presence of Ca(2+), Zn(2+) and Ni(2+). Functionally, exhibits 3'-exonuclease activities and apurinic/apyrimidinic (AP) endonuclease (in vitro). Show preferential AP endonuclease activity on double-stranded DNA substrates and 3'- exonuclease activity on single-stranded DNA. The polypeptide is Putative deoxyribonuclease tatdn3-B (tatdn3-b) (Xenopus laevis (African clawed frog)).